Here is a 390-residue protein sequence, read N- to C-terminus: GTPase Obg (390 aa).

Positions 1–159 constitute an Obg domain; that stretch reads MKFVDEAAIL…RDILLELLLL (159 aa). In terms of domain architecture, OBG-type G spans 160–333; the sequence is ADVGMLGLPN…LCWDVMKFIN (174 aa). Residues 166–173, 191–195, 213–216, 283–286, and 314–316 contribute to the GTP site; these read GLPNAGKS, FTTLV, DIPG, NKID, and SAV. 2 residues coordinate Mg(2+): Ser173 and Thr193. Residues 366-384 show a composition bias toward acidic residues; the sequence is AEADDDWDDDWDEEDDEGV. A disordered region spans residues 366-390; it reads AEADDDWDDDWDEEDDEGVEIIYQK.

The protein belongs to the TRAFAC class OBG-HflX-like GTPase superfamily. OBG GTPase family. As to quaternary structure, monomer. Requires Mg(2+) as cofactor.

The protein localises to the cytoplasm. Functionally, an essential GTPase which binds GTP, GDP and possibly (p)ppGpp with moderate affinity, with high nucleotide exchange rates and a fairly low GTP hydrolysis rate. Plays a role in control of the cell cycle, stress response, ribosome biogenesis and in those bacteria that undergo differentiation, in morphogenesis control. In Serratia proteamaculans (strain 568), this protein is GTPase Obg.